The primary structure comprises 87 residues: Cell division topological specificity factor (87 aa).

This sequence belongs to the MinE family.

In terms of biological role, prevents the cell division inhibition by proteins MinC and MinD at internal division sites while permitting inhibition at polar sites. This ensures cell division at the proper site by restricting the formation of a division septum at the midpoint of the long axis of the cell. This is Cell division topological specificity factor from Acidiphilium cryptum (strain JF-5).